The sequence spans 459 residues: tRNA modification GTPase MnmE (459 aa).

Arg22, Glu87, and Arg126 together coordinate (6S)-5-formyl-5,6,7,8-tetrahydrofolate. Positions 221-381 constitute a TrmE-type G domain; sequence GINVAICGKP…LEESIEKAVL (161 aa). Asn231 lines the K(+) pocket. Residues 231-236, 250-256, and 275-278 contribute to the GTP site; these read NVGKSS, TSIPGTT, and DTAG. Ser235 contributes to the Mg(2+) binding site. K(+) contacts are provided by Thr250, Ile252, and Thr255. Thr256 contacts Mg(2+). Lys459 contacts (6S)-5-formyl-5,6,7,8-tetrahydrofolate.

It belongs to the TRAFAC class TrmE-Era-EngA-EngB-Septin-like GTPase superfamily. TrmE GTPase family. Homodimer. Heterotetramer of two MnmE and two MnmG subunits. K(+) serves as cofactor.

The protein resides in the cytoplasm. Exhibits a very high intrinsic GTPase hydrolysis rate. Involved in the addition of a carboxymethylaminomethyl (cmnm) group at the wobble position (U34) of certain tRNAs, forming tRNA-cmnm(5)s(2)U34. The sequence is that of tRNA modification GTPase MnmE from Syntrophomonas wolfei subsp. wolfei (strain DSM 2245B / Goettingen).